The sequence spans 1044 residues: Elongation factor 3 (1044 aa).

An HEAT 1 repeat occupies 5-42 (AQSIKVLGELFEKLSVATAENREATATEIASFLNGNII). ADP contacts are provided by I42 and H44. The HEAT 2 repeat unit spans residues 45–80 (DVPEEFFKNLTKAVKDKKTAAAALETIAHIANENNL). S83 lines the ADP pocket. HEAT repeat units lie at residues 86–123 (PYIVDLVPEVCVKTGDKDKDVQSIASETLLAIVKAIDP), 124–162 (VAIKVILPHLTKSLVTTNKWQEKVSVLAAISALVDAAKT), 166–203 (LRMPELIPVLSEAMWDTKKEVKHAATATMTKATETVDN), 205–241 (DIERFIPELIQCIADPSQVSETVHLLGATTFVAEVTP), 242–279 (ATLSIMVPLLNRGLAERETSIKRKAAVIIDNMCKLVED), and 285–323 (PFLEKLLPGLKNNFATIADPEAREVTLRGLKTLRRVGNV). Residues T392, H396, and E397 each coordinate ADP. ABC transporter domains lie at 426–641 (DEGE…YYEL) and 667–993 (VKVS…KKED). Residues N703, E922, N925, and H951 each coordinate ADP. The segment at 975–1044 (GHNWVSGQGS…DAYVSSDDEF (70 aa)) is disordered. A compositionally biased stretch (basic and acidic residues) spans 987 to 999 (RLEKKEDEGDKFD). Residues 1009-1031 (NKKKKLSSAELRKKKKERMKKKK) show a composition bias toward basic residues.

This sequence belongs to the ABC transporter superfamily. ABCF family. EF3 subfamily. In terms of assembly, monomer.

The protein localises to the cytoplasm. It carries out the reaction ATP + H2O = ADP + phosphate + H(+). It participates in protein biosynthesis; polypeptide chain elongation. In terms of biological role, ribosome-dependent ATPase that functions in cytoplasmic translation elongation. Required for the ATP-dependent release of deacylated tRNA from the ribosomal E-site during protein biosynthesis. Stimulates the eEF1A-dependent binding of aminoacyl-tRNA to the ribosomal A-site, which has reduced affinity for tRNA as long as the E-site is occupied. Assists translation termination by stimulating the release of nascent protein from the ribosome by release factors. This chain is Elongation factor 3 (TEF3), found in Eremothecium gossypii (strain ATCC 10895 / CBS 109.51 / FGSC 9923 / NRRL Y-1056) (Yeast).